The sequence spans 97 residues: Co-chaperonin GroES (97 aa).

It belongs to the GroES chaperonin family. In terms of assembly, heptamer of 7 subunits arranged in a ring. Interacts with the chaperonin GroEL.

The protein resides in the cytoplasm. Together with the chaperonin GroEL, plays an essential role in assisting protein folding. The GroEL-GroES system forms a nano-cage that allows encapsulation of the non-native substrate proteins and provides a physical environment optimized to promote and accelerate protein folding. GroES binds to the apical surface of the GroEL ring, thereby capping the opening of the GroEL channel. The polypeptide is Co-chaperonin GroES (Blochmanniella floridana).